The primary structure comprises 456 residues: tRNA-2-methylthio-N(6)-dimethylallyladenosine synthase (456 aa).

An MTTase N-terminal domain is found at K9 to S126. [4Fe-4S] cluster-binding residues include C18, C55, C89, C163, C167, and C170. The Radical SAM core domain occupies D149–A381. In terms of domain architecture, TRAM spans R384–A448.

This sequence belongs to the methylthiotransferase family. MiaB subfamily. As to quaternary structure, monomer. Requires [4Fe-4S] cluster as cofactor.

It is found in the cytoplasm. The enzyme catalyses N(6)-dimethylallyladenosine(37) in tRNA + (sulfur carrier)-SH + AH2 + 2 S-adenosyl-L-methionine = 2-methylsulfanyl-N(6)-dimethylallyladenosine(37) in tRNA + (sulfur carrier)-H + 5'-deoxyadenosine + L-methionine + A + S-adenosyl-L-homocysteine + 2 H(+). Catalyzes the methylthiolation of N6-(dimethylallyl)adenosine (i(6)A), leading to the formation of 2-methylthio-N6-(dimethylallyl)adenosine (ms(2)i(6)A) at position 37 in tRNAs that read codons beginning with uridine. The protein is tRNA-2-methylthio-N(6)-dimethylallyladenosine synthase of Cellvibrio japonicus (strain Ueda107) (Pseudomonas fluorescens subsp. cellulosa).